The following is a 53-amino-acid chain: Large ribosomal subunit protein eL40 (53 aa).

This sequence belongs to the eukaryotic ribosomal protein eL40 family.

The chain is Large ribosomal subunit protein eL40 from Pyrobaculum arsenaticum (strain DSM 13514 / JCM 11321 / PZ6).